The sequence spans 325 residues: Acetyl-coenzyme A carboxylase carboxyl transferase subunit alpha (325 aa).

A CoA carboxyltransferase C-terminal domain is found at 35–292 (EINKLEARLE…DDVLKRSLRE (258 aa)).

The protein belongs to the AccA family. Acetyl-CoA carboxylase is a heterohexamer composed of biotin carboxyl carrier protein (AccB), biotin carboxylase (AccC) and two subunits each of ACCase subunit alpha (AccA) and ACCase subunit beta (AccD).

Its subcellular location is the cytoplasm. The catalysed reaction is N(6)-carboxybiotinyl-L-lysyl-[protein] + acetyl-CoA = N(6)-biotinyl-L-lysyl-[protein] + malonyl-CoA. Its pathway is lipid metabolism; malonyl-CoA biosynthesis; malonyl-CoA from acetyl-CoA: step 1/1. Its function is as follows. Component of the acetyl coenzyme A carboxylase (ACC) complex. First, biotin carboxylase catalyzes the carboxylation of biotin on its carrier protein (BCCP) and then the CO(2) group is transferred by the carboxyltransferase to acetyl-CoA to form malonyl-CoA. This chain is Acetyl-coenzyme A carboxylase carboxyl transferase subunit alpha, found in Anoxybacillus flavithermus (strain DSM 21510 / WK1).